A 595-amino-acid polypeptide reads, in one-letter code: MHRTHHCAQLTTSQLGATVSLLGWVDTIRDQGGIIFVDLRDRKGITQIQLEPHENAKLAEQVKQLKPESVIGITGKVVRRPAGTENPALPTGEVEVVASSLEIHNISDTPPFPLDDAGGDKVNEDLRLTYRYLDLRRPKMRKNLQVRHRAAKSIRDYFDAQEFIEVETPALFKSTPEGAREYLVPSRIHPGQFYALSQSPQQFKQILMVAGVEKYFQIARCFRDEDLRADRQMEFTQVDVEASFVTREDIYALFEGMLKKVWKDVLDVDIPTPFPRMAFHDAMNRYGVDKPDVRFALELADFSELFKNSAFKVFQSTVAGGGVVKALNAKGLADLTQGELKSMEDTAKSLGAKGLAFIKVEGGEWKSPIVKFFTEPEKAELTKRLNIEEGDIIFFAAAPWEKACAILGRLRLESAAFLQKRGKLTIRHDDWQFLWVIDFPLMTYDEAENRYVATHHPFTAPVPDDTQYLDSDPKKVRGQHYDVVLNGMELGGGSIRIHQPVLQKKVFEDVLKIPQDVVESRFGYMLKAFTYGAPPHGGIAFGLDRMVALLCGTTSIRDVIAFPKTQKGQDLMAQSPTPVTPRQLKDLHIQTVMPE.

Glu177 serves as a coordination point for L-aspartate. The interval 201–204 (QQFK) is aspartate. Position 223 (Arg223) interacts with L-aspartate. Residues 223-225 (RDE) and Gln232 contribute to the ATP site. His455 contributes to the L-aspartate binding site. Glu489 serves as a coordination point for ATP. Position 496 (Arg496) interacts with L-aspartate. Position 542–545 (542–545 (GLDR)) interacts with ATP.

It belongs to the class-II aminoacyl-tRNA synthetase family. Type 1 subfamily. Homodimer.

The protein localises to the cytoplasm. The enzyme catalyses tRNA(Asx) + L-aspartate + ATP = L-aspartyl-tRNA(Asx) + AMP + diphosphate. Functionally, aspartyl-tRNA synthetase with relaxed tRNA specificity since it is able to aspartylate not only its cognate tRNA(Asp) but also tRNA(Asn). Reaction proceeds in two steps: L-aspartate is first activated by ATP to form Asp-AMP and then transferred to the acceptor end of tRNA(Asp/Asn). This Opitutus terrae (strain DSM 11246 / JCM 15787 / PB90-1) protein is Aspartate--tRNA(Asp/Asn) ligase.